Consider the following 252-residue polypeptide: Cytochrome b6-f complex iron-sulfur subunit, chloroplastic (252 aa).

A helical membrane pass occupies residues 94 to 114; the sequence is LVLAAVAPVVASAGGCYLYYF. One can recognise a Rieske domain in the interval 141–235; that stretch reads WFKSHKKNAR…VEDDNGKILL (95 aa). The [2Fe-2S] cluster site is built by C181, H183, C199, and H202. C186 and C201 are disulfide-bonded.

It belongs to the Rieske iron-sulfur protein family. The 4 large subunits of the cytochrome b6-f complex are cytochrome b6, subunit IV (17 kDa polypeptide, petD), cytochrome f and the Rieske protein, while the 4 small subunits are petG, petL, petM and petN. The complex functions as a dimer. It depends on [2Fe-2S] cluster as a cofactor.

It is found in the plastid. The protein resides in the chloroplast thylakoid membrane. It carries out the reaction 2 oxidized [plastocyanin] + a plastoquinol + 2 H(+)(in) = 2 reduced [plastocyanin] + a plastoquinone + 4 H(+)(out). Component of the cytochrome b6-f complex, which mediates electron transfer between photosystem II (PSII) and photosystem I (PSI), cyclic electron flow around PSI, and state transitions. In Bigelowiella natans (Pedinomonas minutissima), this protein is Cytochrome b6-f complex iron-sulfur subunit, chloroplastic (petC).